A 156-amino-acid polypeptide reads, in one-letter code: Probable histone H2A.6 (156 aa).

Disordered regions lie at residues 1-26 (MDVG…KKPV) and 129-156 (KKTA…QARS). The span at 9–26 (AAKKAVGRKLGGPKKKPV) shows a compositional bias: basic residues. Residues 130 to 147 (KTAEKADKPAKASKDKAA) show a composition bias toward basic and acidic residues. An SPKK motif motif is present at residues 149 to 152 (SPKK).

It belongs to the histone H2A family. In terms of assembly, the nucleosome is a histone octamer containing two molecules each of H2A, H2B, H3 and H4 assembled in one H3-H4 heterotetramer and two H2A-H2B heterodimers. The octamer wraps approximately 147 bp of DNA.

The protein localises to the nucleus. The protein resides in the chromosome. Functionally, core component of nucleosome. Nucleosomes wrap and compact DNA into chromatin, limiting DNA accessibility to the cellular machineries which require DNA as a template. Histones thereby play a central role in transcription regulation, DNA repair, DNA replication and chromosomal stability. DNA accessibility is regulated via a complex set of post-translational modifications of histones, also called histone code, and nucleosome remodeling. The sequence is that of Probable histone H2A.6 from Oryza sativa subsp. indica (Rice).